Consider the following 261-residue polypeptide: Putative hydro-lyase SSP0308 (261 aa).

The protein belongs to the D-glutamate cyclase family.

The sequence is that of Putative hydro-lyase SSP0308 from Staphylococcus saprophyticus subsp. saprophyticus (strain ATCC 15305 / DSM 20229 / NCIMB 8711 / NCTC 7292 / S-41).